A 313-amino-acid chain; its full sequence is Formimidoylglutamase (313 aa).

Mn(2+) is bound by residues histidine 130, aspartate 155, histidine 157, aspartate 159, aspartate 241, and aspartate 243.

The protein belongs to the arginase family. Mn(2+) serves as cofactor.

It carries out the reaction N-formimidoyl-L-glutamate + H2O = formamide + L-glutamate. It functions in the pathway amino-acid degradation; L-histidine degradation into L-glutamate; L-glutamate from N-formimidoyl-L-glutamate (hydrolase route): step 1/1. Catalyzes the conversion of N-formimidoyl-L-glutamate to L-glutamate and formamide. The chain is Formimidoylglutamase from Salmonella agona (strain SL483).